A 170-amino-acid polypeptide reads, in one-letter code: Shikimate kinase (170 aa).

Residue 11–16 (LSGKST) participates in ATP binding. S15 lines the Mg(2+) pocket. D33, R57, and G79 together coordinate substrate. Position 119 (R119) interacts with ATP. R137 provides a ligand contact to substrate.

Belongs to the shikimate kinase family. In terms of assembly, monomer. Mg(2+) serves as cofactor.

The protein resides in the cytoplasm. It catalyses the reaction shikimate + ATP = 3-phosphoshikimate + ADP + H(+). It participates in metabolic intermediate biosynthesis; chorismate biosynthesis; chorismate from D-erythrose 4-phosphate and phosphoenolpyruvate: step 5/7. Catalyzes the specific phosphorylation of the 3-hydroxyl group of shikimic acid using ATP as a cosubstrate. The polypeptide is Shikimate kinase (Clostridium botulinum (strain Okra / Type B1)).